Here is a 221-residue protein sequence, read N- to C-terminus: Octanoyltransferase (221 aa).

The region spanning 29-208 (DEIPDTCLLL…RLTEFLLPAR (180 aa)) is the BPL/LPL catalytic domain. Substrate-binding positions include 67 to 74 (RGGRITWH), 138 to 140 (AIG), and 151 to 153 (GFA). The Acyl-thioester intermediate role is filled by C169.

This sequence belongs to the LipB family.

It localises to the cytoplasm. The enzyme catalyses octanoyl-[ACP] + L-lysyl-[protein] = N(6)-octanoyl-L-lysyl-[protein] + holo-[ACP] + H(+). The protein operates within protein modification; protein lipoylation via endogenous pathway; protein N(6)-(lipoyl)lysine from octanoyl-[acyl-carrier-protein]: step 1/2. Its function is as follows. Catalyzes the transfer of endogenously produced octanoic acid from octanoyl-acyl-carrier-protein onto the lipoyl domains of lipoate-dependent enzymes. Lipoyl-ACP can also act as a substrate although octanoyl-ACP is likely to be the physiological substrate. In Acidothermus cellulolyticus (strain ATCC 43068 / DSM 8971 / 11B), this protein is Octanoyltransferase.